We begin with the raw amino-acid sequence, 319 residues long: Acetyl-coenzyme A carboxylase carboxyl transferase subunit alpha (319 aa).

One can recognise a CoA carboxyltransferase C-terminal domain in the interval 32–293 (NVETEVRALR…KAVLLNELDA (262 aa)).

The protein belongs to the AccA family. Acetyl-CoA carboxylase is a heterohexamer composed of biotin carboxyl carrier protein (AccB), biotin carboxylase (AccC) and two subunits each of ACCase subunit alpha (AccA) and ACCase subunit beta (AccD).

It localises to the cytoplasm. It catalyses the reaction N(6)-carboxybiotinyl-L-lysyl-[protein] + acetyl-CoA = N(6)-biotinyl-L-lysyl-[protein] + malonyl-CoA. Its pathway is lipid metabolism; malonyl-CoA biosynthesis; malonyl-CoA from acetyl-CoA: step 1/1. Functionally, component of the acetyl coenzyme A carboxylase (ACC) complex. First, biotin carboxylase catalyzes the carboxylation of biotin on its carrier protein (BCCP) and then the CO(2) group is transferred by the carboxyltransferase to acetyl-CoA to form malonyl-CoA. The protein is Acetyl-coenzyme A carboxylase carboxyl transferase subunit alpha of Xanthomonas axonopodis pv. citri (strain 306).